Here is a 197-residue protein sequence, read N- to C-terminus: Protein-S-isoprenylcysteine O-methyltransferase B (197 aa).

3 consecutive transmembrane segments (helical) span residues 16–36 (MFLAIIFFHTSEYILAIAIHG), 52–72 (ALAMLISVLEYIAEIVFFPGL), and 81–101 (FGLTMIILGEILRKTAIITAG). S-adenosyl-L-methionine contacts are provided by residues 116–119 (HKLV), Tyr124, and 129–132 (HPSY). Residues 140 to 160 (VGTQVMLCNPISAIAFAVVVW) form a helical membrane-spanning segment. Arg166 is a binding site for substrate. Glu170 is an S-adenosyl-L-methionine binding site.

It belongs to the class VI-like SAM-binding methyltransferase superfamily. Isoprenylcysteine carboxyl methyltransferase family. It depends on Zn(2+) as a cofactor. As to expression, expressed in flowers, stems, leaves, roots and siliques. Detected in apices and vascular tissues of leaves and roots, in the stigma and in the filaments and anthers of stamen. Not found in petioles or hypocotyls.

The protein localises to the endoplasmic reticulum membrane. The enzyme catalyses [protein]-C-terminal S-[(2E,6E)-farnesyl]-L-cysteine + S-adenosyl-L-methionine = [protein]-C-terminal S-[(2E,6E)-farnesyl]-L-cysteine methyl ester + S-adenosyl-L-homocysteine. With respect to regulation, inhibited by farnesylthioacetic acid (FTAA) and N-acetyl-S-trans, trans-farnesyl-l-cysteine (AFC). Catalyzes the post-translational methylation of isoprenylated C-terminal cysteine residues, resulting in the modulation of the function of prenylated proteins. Involved in negative regulation of abscisic acid signaling. Carboxyl methylation is a reversible and potentially regulated step in the post-translational modification of prenylated proteins. The chain is Protein-S-isoprenylcysteine O-methyltransferase B from Arabidopsis thaliana (Mouse-ear cress).